A 793-amino-acid polypeptide reads, in one-letter code: Signal transducer and activator of transcription 5A (793 aa).

Tyr90 carries the phosphotyrosine modification. Ser128 carries the post-translational modification Phosphoserine. The SH2 domain maps to 589 to 686 (WNDGAILGFV…EVFAKYYTPV (98 aa)). Tyr682 and Tyr694 each carry phosphotyrosine. Residue Ser779 is modified to Phosphoserine.

This sequence belongs to the transcription factor STAT family. In terms of assembly, forms a homodimer or a heterodimer with a related family member. Interacts with NCOA1 and SOCS7. Binds NR3C1. Interacts with ERBB4. Interacts with EBF4. Interacts with CD69. ISGylated. Post-translationally, tyrosine phosphorylated in response to KITLG/SCF, IL2, IL3, IL7, IL15, CSF2/GMCSF, GH1, PRL, EPO and THPO. Activated KIT promotes phosphorylation on tyrosine residues and subsequent translocation to the nucleus. Tyrosine phosphorylated in response to constitutively activated FGFR1, FGFR2, FGFR3 and FGFR4. Tyrosine phosphorylation is required for DNA-binding activity and dimerization. Serine phosphorylation is also required for maximal transcriptional activity. Tyrosine phosphorylated in response to signaling via activated FLT3; wild-type FLT3 results in much weaker phosphorylation than constitutively activated mutant FLT3. Alternatively, can be phosphorylated by JAK2 at Tyr-694. In the virgin, found in most tissues except brain and muscle. During lactation, abundantly found in mammary tissue, as well as in other secretory organs such as salivary gland and seminal vesicle.

The protein localises to the cytoplasm. Its subcellular location is the nucleus. In terms of biological role, carries out a dual function: signal transduction and activation of transcription. Mediates cellular responses to the cytokine KITLG/SCF and other growth factors. May mediate cellular responses to activated FGFR1, FGFR2, FGFR3 and FGFR4. Binds to the GAS element and activates PRL-induced transcription. Regulates the expression of milk proteins during lactation. The polypeptide is Signal transducer and activator of transcription 5A (Stat5a) (Mus musculus (Mouse)).